A 468-amino-acid chain; its full sequence is Glutamate--tRNA ligase (468 aa).

A 'HIGH' region motif is present at residues 8-18; that stretch reads PSPTGDPHVGT. A 'KMSKS' region motif is present at residues 243–247; that stretch reads KISKR. Lys246 is an ATP binding site.

The protein belongs to the class-I aminoacyl-tRNA synthetase family. Glutamate--tRNA ligase type 1 subfamily. Monomer.

It is found in the cytoplasm. It carries out the reaction tRNA(Glu) + L-glutamate + ATP = L-glutamyl-tRNA(Glu) + AMP + diphosphate. In terms of biological role, catalyzes the attachment of glutamate to tRNA(Glu) in a two-step reaction: glutamate is first activated by ATP to form Glu-AMP and then transferred to the acceptor end of tRNA(Glu). This Thermus thermophilus (strain ATCC BAA-163 / DSM 7039 / HB27) protein is Glutamate--tRNA ligase.